A 341-amino-acid chain; its full sequence is Phosphoribosylformylglycinamidine cyclo-ligase (341 aa).

Belongs to the AIR synthase family.

It is found in the cytoplasm. It carries out the reaction 2-formamido-N(1)-(5-O-phospho-beta-D-ribosyl)acetamidine + ATP = 5-amino-1-(5-phospho-beta-D-ribosyl)imidazole + ADP + phosphate + H(+). The protein operates within purine metabolism; IMP biosynthesis via de novo pathway; 5-amino-1-(5-phospho-D-ribosyl)imidazole from N(2)-formyl-N(1)-(5-phospho-D-ribosyl)glycinamide: step 2/2. This is Phosphoribosylformylglycinamidine cyclo-ligase from Thermosynechococcus vestitus (strain NIES-2133 / IAM M-273 / BP-1).